A 335-amino-acid chain; its full sequence is uncharacterized protein (335 aa).

This is an uncharacterized protein from Escherichia coli (strain K12).